The primary structure comprises 498 residues: Probable cytosol aminopeptidase (498 aa).

Positions 263 and 268 each coordinate Mn(2+). The active site involves lysine 275. Positions 286, 345, and 347 each coordinate Mn(2+). Arginine 349 is an active-site residue.

The protein belongs to the peptidase M17 family. Mn(2+) is required as a cofactor.

The protein resides in the cytoplasm. It carries out the reaction Release of an N-terminal amino acid, Xaa-|-Yaa-, in which Xaa is preferably Leu, but may be other amino acids including Pro although not Arg or Lys, and Yaa may be Pro. Amino acid amides and methyl esters are also readily hydrolyzed, but rates on arylamides are exceedingly low.. The catalysed reaction is Release of an N-terminal amino acid, preferentially leucine, but not glutamic or aspartic acids.. In terms of biological role, presumably involved in the processing and regular turnover of intracellular proteins. Catalyzes the removal of unsubstituted N-terminal amino acids from various peptides. This chain is Probable cytosol aminopeptidase, found in Rhodopseudomonas palustris (strain BisA53).